A 680-amino-acid polypeptide reads, in one-letter code: Dipeptidyl carboxypeptidase (680 aa).

H469 contributes to the Zn(2+) binding site. The active site involves E470. The Zn(2+) site is built by H473 and H476.

It belongs to the peptidase M3 family. Requires Zn(2+) as cofactor.

It localises to the cytoplasm. The enzyme catalyses Hydrolysis of unblocked, C-terminal dipeptides from oligopeptides, with broad specificity. Does not hydrolyze bonds in which P1' is Pro, or both P1 and P1' are Gly.. Its function is as follows. Removes dipeptides from the C-termini of N-blocked tripeptides, tetrapeptides and larger peptides. This Salmonella typhimurium (strain LT2 / SGSC1412 / ATCC 700720) protein is Dipeptidyl carboxypeptidase (dcp).